The primary structure comprises 138 residues: Small ribosomal subunit protein uS11c (138 aa).

The segment at 1-22 (MAKPILRIGSRKNTRSGSRKNV) is disordered. A compositionally biased stretch (basic residues) spans 9-22 (GSRKNTRSGSRKNV).

It belongs to the universal ribosomal protein uS11 family. In terms of assembly, part of the 30S ribosomal subunit.

Its subcellular location is the plastid. It localises to the chloroplast. This is Small ribosomal subunit protein uS11c from Arabis hirsuta (Hairy rock-cress).